We begin with the raw amino-acid sequence, 150 residues long: Ribosome maturation factor RimP (150 aa).

This sequence belongs to the RimP family.

The protein localises to the cytoplasm. Functionally, required for maturation of 30S ribosomal subunits. This is Ribosome maturation factor RimP from Klebsiella pneumoniae (strain 342).